A 323-amino-acid polypeptide reads, in one-letter code: Prenyl transferase (323 aa).

Positions 46, 49, and 81 each coordinate isopentenyl diphosphate. Mg(2+)-binding residues include aspartate 88 and aspartate 92. An all-trans-polyprenyl diphosphate is bound at residue arginine 97. Arginine 98 is a binding site for isopentenyl diphosphate. An all-trans-polyprenyl diphosphate-binding residues include lysine 174, threonine 175, and glutamine 212.

Belongs to the FPP/GGPP synthase family. It depends on Mg(2+) as a cofactor.

Its subcellular location is the plastid. It is found in the chloroplast. Possible role in synthesis of the nonaprenyl side chain of plastoquinone or in synthesis of other prenyl chains such as undekaprenyl pyrophosphate. The polypeptide is Prenyl transferase (preA) (Cyanidium caldarium (Red alga)).